The sequence spans 749 residues: Chitin synthase G (749 aa).

Transmembrane regions (helical) follow at residues 40–60, 73–93, 421–441, 451–471, and 483–503; these read CVGE…PLPP, VLQW…WLFC, FMQN…ISII, PVGF…YFGI, and LMFI…IFTA. A disordered region spans residues 683–749; sequence IESGSGIPSG…RRYMQPEQMV (67 aa). The segment covering 697–718 has biased composition (polar residues); that stretch reads LSSSVPQSGMQQSRAVPGNMSQ. Residue N715 is glycosylated (N-linked (GlcNAc...) asparagine). Residues 728 to 742 are compositionally biased toward basic residues; sequence YTKRPSRIPRQKRRY.

The protein belongs to the chitin synthase family. Class VI subfamily.

Its subcellular location is the cell membrane. The catalysed reaction is [(1-&gt;4)-N-acetyl-beta-D-glucosaminyl](n) + UDP-N-acetyl-alpha-D-glucosamine = [(1-&gt;4)-N-acetyl-beta-D-glucosaminyl](n+1) + UDP + H(+). Its function is as follows. Polymerizes chitin, a structural polymer of the cell wall and septum, by transferring the sugar moiety of UDP-GlcNAc to the non-reducing end of the growing chitin polymer. Plays an important role in septal growth or maintenance. Mediates colony spore formation. The protein is Chitin synthase G of Aspergillus niger (strain ATCC MYA-4892 / CBS 513.88 / FGSC A1513).